The following is a 1511-amino-acid chain: DNA-directed RNA polymerase subunit beta' (1511 aa).

Zn(2+)-binding residues include cysteine 75, cysteine 77, cysteine 90, and cysteine 93. Mg(2+) is bound by residues aspartate 474, aspartate 476, and aspartate 478. Positions 804, 878, 885, and 888 each coordinate Zn(2+).

Belongs to the RNA polymerase beta' chain family. In terms of assembly, the RNAP catalytic core consists of 2 alpha, 1 beta, 1 beta' and 1 omega subunit. When a sigma factor is associated with the core the holoenzyme is formed, which can initiate transcription. The cofactor is Mg(2+). It depends on Zn(2+) as a cofactor.

The catalysed reaction is RNA(n) + a ribonucleoside 5'-triphosphate = RNA(n+1) + diphosphate. DNA-dependent RNA polymerase catalyzes the transcription of DNA into RNA using the four ribonucleoside triphosphates as substrates. This is DNA-directed RNA polymerase subunit beta' from Aliarcobacter butzleri (strain RM4018) (Arcobacter butzleri).